The sequence spans 107 residues: MAMKKIRKGDNVIILSGKDKGKQSTVIKFESVEKVIVRDVNRVKSHVKPNPSKNIVGGIVEIEKPIHVSNIAIFNSDKNKADRVGFRFNESGNKVRYFKSDGTLIDL.

This sequence belongs to the universal ribosomal protein uL24 family. Part of the 50S ribosomal subunit.

Functionally, one of two assembly initiator proteins, it binds directly to the 5'-end of the 23S rRNA, where it nucleates assembly of the 50S subunit. One of the proteins that surrounds the polypeptide exit tunnel on the outside of the subunit. This is Large ribosomal subunit protein uL24 from Nitrosomonas eutropha (strain DSM 101675 / C91 / Nm57).